The chain runs to 124 residues: Ragulator complex protein LAMTOR3 (124 aa).

The required for interaction with LAMTOR2 stretch occupies residues 57 to 70 (TDQGSKLGLSKNKS).

The protein belongs to the LAMTOR3 family. Part of the Ragulator complex composed of LAMTOR1, LAMTOR2, LAMTOR3, LAMTOR4 and LAMTOR5. LAMTOR4 and LAMTOR5 form a heterodimer that interacts, through LAMTOR1, with a LAMTOR2, LAMTOR3 heterodimer. The Ragulator complex interacts with both the mTORC1 complex and heterodimers constituted of the Rag GTPases RagA/RRAGA, RagB/RRAGB, RagC/RRAGC and RagD/RRAGD; regulated by amino acid availability. The Ragulator complex interacts with SLC38A9; the probable amino acid sensor. Interacts with LAMTOR1 and LAMTOR2; the interaction is direct. Component of the lysosomal folliculin complex (LFC), composed of FLCN, FNIP1 (or FNIP2), RagA/RRAGA or RagB/RRAGB GDP-bound, RagC/RRAGC or RagD/RRAGD GTP-bound, and Ragulator. Interacts with MAP2K1/MEK1 and MAPK2. Interacts with MORG1.

It is found in the late endosome membrane. Functionally, as part of the Ragulator complex it is involved in amino acid sensing and activation of mTORC1, a signaling complex promoting cell growth in response to growth factors, energy levels, and amino acids. Activated by amino acids through a mechanism involving the lysosomal V-ATPase, the Ragulator plays a dual role for the small GTPases Rag (RagA/RRAGA, RagB/RRAGB, RagC/RRAGC and/or RagD/RRAGD): it (1) acts as a guanine nucleotide exchange factor (GEF), activating the small GTPases Rag and (2) mediates recruitment of Rag GTPases to the lysosome membrane. Activated Ragulator and Rag GTPases function as a scaffold recruiting mTORC1 to lysosomes where it is in turn activated. Adapter protein that enhances the efficiency of the MAP kinase cascade facilitating the activation of MAPK2. The protein is Ragulator complex protein LAMTOR3 (Lamtor3) of Mus musculus (Mouse).